We begin with the raw amino-acid sequence, 125 residues long: Small ribosomal subunit protein uS12 (125 aa).

The disordered stretch occupies residues 1-31; it reads MPTINQLVRHGRQTEVTKSKSPAMQGGPQRR. The residue at position 89 (Asp-89) is a 3-methylthioaspartic acid. The tract at residues 105-125 is disordered; the sequence is QGVKDRKQSRSKYGAKRPKKA. Basic residues predominate over residues 113–125; that stretch reads SRSKYGAKRPKKA.

It belongs to the universal ribosomal protein uS12 family. As to quaternary structure, part of the 30S ribosomal subunit. Contacts proteins S8 and S17. May interact with IF1 in the 30S initiation complex.

Functionally, with S4 and S5 plays an important role in translational accuracy. Interacts with and stabilizes bases of the 16S rRNA that are involved in tRNA selection in the A site and with the mRNA backbone. Located at the interface of the 30S and 50S subunits, it traverses the body of the 30S subunit contacting proteins on the other side and probably holding the rRNA structure together. The combined cluster of proteins S8, S12 and S17 appears to hold together the shoulder and platform of the 30S subunit. This chain is Small ribosomal subunit protein uS12, found in Methylibium petroleiphilum (strain ATCC BAA-1232 / LMG 22953 / PM1).